Here is a 903-residue protein sequence, read N- to C-terminus: Dynamin-like GTPase msp1, mitochondrial (903 aa).

The transit peptide at 1–78 directs the protein to the mitochondrion; the sequence is MGISWFLSRF…RFFSFSSISR (78 aa). A helical transmembrane segment spans residues 86–103; it reads LPVAGFSLVAGGAAYIGA. The span at 167-188 shows a compositional bias: basic and acidic residues; sequence VLQAERAKEHRSNSNDKQKSSD. The disordered stretch occupies residues 167 to 198; that stretch reads VLQAERAKEHRSNSNDKQKSSDNDEDPNDTTV. A helical transmembrane segment spans residues 198-214; sequence VGIGAALAASILSVDSV. One can recognise a Dynamin-type G domain in the interval 260–531; sequence AVTLPSIVVI…LEYTMSKNLQ (272 aa). Positions 270 to 277 are G1 motif; the sequence is GSQSSGKS. Residues Ser273, Ser274, Gly275, Lys276, Ser277, Ser278, and Gly292 each coordinate GTP. Mg(2+) is bound at residue Ser277. Residues 296–298 are G2 motif; the sequence is VTR. Residues Thr297 and Asp370 each coordinate Mg(2+). Positions 370–373 are G3 motif; it reads DLPG. A G4 motif region spans residues 438 to 441; the sequence is TKMD. GTP contacts are provided by Lys439, Asp441, and Ser468. The segment at 467 to 470 is G5 motif; it reads ISRI. The segment at 691–805 is paddle region; sequence ATSEQVENCV…VLKSRACKHK (115 aa). An intrachain disulfide couples Cys802 to Cys811. The GED domain maps to 805 to 898; it reads KEAKYTCPEI…KINSLVILEQ (94 aa).

It belongs to the TRAFAC class dynamin-like GTPase superfamily. Dynamin/Fzo/YdjA family. Homooligomer. Interacts with cdr1. In terms of processing, cleavage of the transit peptide by mitochondrial processing protease (MPP) produces a long integral membrane form of msp1 (l-msp1). Further processing by a rhomboid protease after the transmembrane regions produces a short peripheral membrane form of msp1 (s-msp1). Both isoforms are required for full activity.

Its subcellular location is the mitochondrion inner membrane. It localises to the mitochondrion intermembrane space. The enzyme catalyses GTP + H2O = GDP + phosphate + H(+). Functionally, dynamin-related GTPase that is essential for normal mitochondrial morphology by mediating fusion of the mitochondrial inner membranes and maintaining respiratory chain function. Exists in two forms: the transmembrane, long form (Dynamin-like GTPase msp1, long form; l-msp1), which is tethered to the inner mitochondrial membrane, and the short soluble form (Dynamin-like GTPase msp1, short form; s-msp1), which results from proteolytic cleavage and localizes in the intermembrane space. Both forms (l-msp1 and s-msp1) cooperate to catalyze the fusion of the mitochondrial inner membrane. Its role in mitochondrial morphology is required for mitochondrial genome maintenance. Its function is as follows. Constitutes the transmembrane long form (l-msp1) that plays a central role in mitochondrial inner membrane fusion. L-msp1 and the soluble short form (s-msp1) form higher-order helical assemblies that coordinate the fusion of mitochondrial inner membranes. Inner membrane-anchored l-msp1 molecules initiate membrane remodeling by recruiting soluble s-msp1 to rapidly polymerize into a flexible cylindrical scaffold encaging the mitochondrial inner membrane. Once at the membrane surface, the formation of s-msp1 helices induce bilayer curvature. Msp1 dimerization through the paddle region, which inserts into cardiolipin-containing membrane, promotes GTP hydrolysis and the helical assembly of a flexible msp1 lattice on the membrane, which drives membrane curvature and mitochondrial fusion. Constitutes the soluble short form (s-msp1) generated by cleavage, which plays a central role in mitochondrial inner membrane fusion. The transmembrane long form (l-msp1) and the s-msp1 form higher-order helical assemblies that coordinate the fusion of mitochondrial inner membranes. Inner membrane-anchored l-msp1 molecules initiate membrane remodeling by recruiting soluble s-msp1 to rapidly polymerize into a flexible cylindrical scaffold encaging the mitochondrial inner membrane. Once at the membrane surface, the formation of s-msp1 helices induce bilayer curvature. Msp1 dimerization through the paddle region, which inserts into cardiolipin-containing membrane, promotes GTP hydrolysis and the helical assembly of a flexible msp1 lattice on the membrane, which drives membrane curvature and mitochondrial fusion. In Schizosaccharomyces pombe (strain 972 / ATCC 24843) (Fission yeast), this protein is Dynamin-like GTPase msp1, mitochondrial.